We begin with the raw amino-acid sequence, 612 residues long: Replication protein E1 (612 aa).

The short motif at 74–76 (KRK) is the Nuclear localization signal element. A phosphoserine; by host mark is found at Ser80 and Ser95. The short motif at 94–103 (ISPRLETISI) is the Nuclear export signal element. The tract at residues 148 to 315 (HTGEVGAAGV…TLINHQLDSE (168 aa)) is DNA-binding region. Positions 414–564 (VEFISFMIAF…FPFKDNGDPG (151 aa)) constitute an SF3 helicase domain. 440 to 447 (GPPNTGKS) is an ATP binding site. Lys521 is covalently cross-linked (Glycyl lysine isopeptide (Lys-Gly) (interchain with G-Cter in SUMO)). The tract at residues 587 to 612 (DQEDEGNDGKPQQSLRLTARAANEPI) is disordered.

This sequence belongs to the papillomaviridae E1 protein family. In terms of assembly, can form hexamers. Interacts with E2 protein; this interaction increases E1 DNA binding specificity. Interacts with host DNA polymerase subunit POLA2. Interacts with host single stranded DNA-binding protein RPA1. Interacts with host TOP1; this interaction stimulates the enzymatic activity of TOP1. In terms of processing, phosphorylated. Sumoylated.

It is found in the host nucleus. The catalysed reaction is Couples ATP hydrolysis with the unwinding of duplex DNA by translocating in the 3'-5' direction.. It carries out the reaction ATP + H2O = ADP + phosphate + H(+). In terms of biological role, ATP-dependent DNA 3'-5' helicase required for initiation of viral DNA replication. It forms a complex with the viral E2 protein. The E1-E2 complex binds to the replication origin which contains binding sites for both proteins. During the initial step, a dimer of E1 interacts with a dimer of protein E2 leading to a complex that binds the viral origin of replication with high specificity. Then, a second dimer of E1 displaces the E2 dimer in an ATP-dependent manner to form the E1 tetramer. Following this, two E1 monomers are added to each half of the site, which results in the formation of two E1 trimers on the viral ori. Subsequently, two hexamers will be created. The double hexamer acts as a bi-directional helicase machinery and unwinds the viral DNA and then recruits the host DNA polymerase to start replication. The chain is Replication protein E1 from Homo sapiens (Human).